A 907-amino-acid chain; its full sequence is Phototropin-2 (907 aa).

The tract at residues 28 to 84 is disordered; the sequence is ATAGLEIVAEDAPSGSSGAHQQQAWRPVAPATAGRDSGGTGSGKSSVDGGVGRASHD. Residues 41-51 are compositionally biased toward polar residues; that stretch reads SGSSGAHQQQA. Positions 89–162 constitute a PAS 1 domain; the sequence is VSQELKDALS…AKIRDAVKHG (74 aa). Residues 138–143, arginine 156, asparagine 171, asparagine 181, and glutamine 202 contribute to the FMN site; that span reads NCRFLQ. S-4a-FMN cysteine is present on cysteine 139. The PAC 1 domain maps to 163 to 217; the sequence is RSFCGRLLNYRKDGAPFWNLLTVTPIRDDNGKVIKFIGMQVEVSKYTEGLSDKRM. The disordered stretch occupies residues 332-363; sequence RSSVGSREAPAVVEEPAPAPPPAPEVVERTDS. The PAS 2 domain maps to 375-448; the sequence is QGIDLATTLE…DKIREAIREQ (74 aa). Residues 424-429, arginine 442, asparagine 457, asparagine 467, and glutamine 488 contribute to the FMN site; that span reads NCRFLQ. An S-4a-FMN cysteine modification is found at cysteine 425. Residues 449-503 form the PAC 2 domain; that stretch reads KEITVQLINYTKSGKKFWNLFHLQPMRDQKGELQYFIGVQLDGSDHVEPLRNRLS. Positions 576-863 constitute a Protein kinase domain; it reads FKPVKPLGCG…ANDIKQHSFF (288 aa). ATP contacts are provided by residues 582-590 and lysine 605; that span reads LGCGDTGSV. Aspartate 701 (proton acceptor) is an active-site residue.

This sequence belongs to the protein kinase superfamily. Ser/Thr protein kinase family. Homodimer. FMN is required as a cofactor. Autophosphorylated in response to blue light irradiation. In terms of processing, 2 molecules of FMN bind covalently to cysteines after exposure to blue light and are reversed in the dark. In terms of tissue distribution, expressed at low levels in leaves of dark-grown seedlings.

The catalysed reaction is L-seryl-[protein] + ATP = O-phospho-L-seryl-[protein] + ADP + H(+). It carries out the reaction L-threonyl-[protein] + ATP = O-phospho-L-threonyl-[protein] + ADP + H(+). Functionally, protein kinase that acts as a blue light photoreceptor in a signal-transduction pathway for phototropic responses. Regulates a wide range of physiological activities in plants that maximize the efficiency of photosynthesis, such as chloroplast relocations, stomata opening, and leaf expansion. The polypeptide is Phototropin-2 (PHOT2) (Oryza sativa subsp. japonica (Rice)).